A 485-amino-acid chain; its full sequence is MTHWIAGEWVAGTGEKLESHTPYSHELLWQGYSASGEQVDAAVKAARRAFLDWKKRPFAEREQKVLAFAELVKANSEQIAQVIAKETGKPLWETRTEAASIAGKIAISIRAYHERTGETVREAAGNQLVLRHRPLGVMAVFGPYNFPGHLPNGHIVPALLAGNTVVFKPSEQTPWTGEVLMQLWQQAGLPAGVINLVQGSKETGIALAQSRGIDGLLFTGSANTGHLLHRQFAGQPDKMLALEMGGNNPMVISEHYGDLDATVYTIIQSAFISSGQRCTCVRRLYVPQGTKGDALLDKLVSVTAKLRIDQPFAEPAPFMGPLVSEAAAQAILKAQADLQALGGKSLLEARALHAAFITPAIIDVTAIERLPDDEYFGPLLQVVRYQTLAQAVELANDTRFGLSAGLVSTDDGEWDYFVEHIRAGIVNRNRQLTGASGDAPFGGPGASGNLRPSAFYAADYCAYPMASMEGDTTLLPATLSPGVEL.

220–225 (GSANTG) contributes to the NAD(+) binding site. Residues E243 and C278 contribute to the active site.

The protein belongs to the aldehyde dehydrogenase family. AstD subfamily.

The catalysed reaction is N-succinyl-L-glutamate 5-semialdehyde + NAD(+) + H2O = N-succinyl-L-glutamate + NADH + 2 H(+). The protein operates within amino-acid degradation; L-arginine degradation via AST pathway; L-glutamate and succinate from L-arginine: step 4/5. Its function is as follows. Catalyzes the NAD-dependent reduction of succinylglutamate semialdehyde into succinylglutamate. This is N-succinylglutamate 5-semialdehyde dehydrogenase from Vibrio cholerae serotype O1 (strain ATCC 39541 / Classical Ogawa 395 / O395).